The sequence spans 142 residues: UPF0102 protein Synpcc7942_0312 (142 aa).

Belongs to the UPF0102 family.

The chain is UPF0102 protein Synpcc7942_0312 from Synechococcus elongatus (strain ATCC 33912 / PCC 7942 / FACHB-805) (Anacystis nidulans R2).